A 422-amino-acid polypeptide reads, in one-letter code: Serine hydroxymethyltransferase (422 aa).

(6S)-5,6,7,8-tetrahydrofolate contacts are provided by residues Leu118 and 122-124; that span reads GHL. The residue at position 227 (Lys227) is an N6-(pyridoxal phosphate)lysine. (6S)-5,6,7,8-tetrahydrofolate is bound by residues Glu243 and 351–353; that span reads SPF.

Belongs to the SHMT family. In terms of assembly, homodimer. The cofactor is pyridoxal 5'-phosphate.

It is found in the cytoplasm. The catalysed reaction is (6R)-5,10-methylene-5,6,7,8-tetrahydrofolate + glycine + H2O = (6S)-5,6,7,8-tetrahydrofolate + L-serine. It functions in the pathway one-carbon metabolism; tetrahydrofolate interconversion. It participates in amino-acid biosynthesis; glycine biosynthesis; glycine from L-serine: step 1/1. Catalyzes the reversible interconversion of serine and glycine with tetrahydrofolate (THF) serving as the one-carbon carrier. This reaction serves as the major source of one-carbon groups required for the biosynthesis of purines, thymidylate, methionine, and other important biomolecules. Also exhibits THF-independent aldolase activity toward beta-hydroxyamino acids, producing glycine and aldehydes, via a retro-aldol mechanism. The sequence is that of Serine hydroxymethyltransferase from Fervidobacterium nodosum (strain ATCC 35602 / DSM 5306 / Rt17-B1).